We begin with the raw amino-acid sequence, 88 residues long: Mini zinc finger protein 3 (88 aa).

A ZF-HD dimerization-type; degenerate zinc finger spans residues 26–72 (YVECQKNHAANIGGYAVDGCREFMASGGDDALTCAACGCHRNFHRRE).

In terms of assembly, homo- and heterodimers. Interacts with ZHD3, ZHD5, ZHD6, ZHD7, ZHD8, ZHD9, ZHD10 and ZHD13. In terms of tissue distribution, mostly expressed in roots, stems and flowers, present in seedlings and leaves, and weakly observed in inflorescence and siliques.

Its subcellular location is the cytoplasm. In terms of biological role, inhibits zinc finger homeodomain (ZHD) transcription factors by interacting with them to prevent both their nuclear localization and their DNA-binding properties. Involved in integrating signals from multiple hormones by regulating the expression of specific genes. Promotes the formation of ectopic shoot meristems on leaf margins. The polypeptide is Mini zinc finger protein 3 (MIF3) (Arabidopsis thaliana (Mouse-ear cress)).